Reading from the N-terminus, the 621-residue chain is F-box/LRR-repeat protein 4 (621 aa).

At R28 the chain carries Asymmetric dimethylarginine. One can recognise an F-box domain in the interval 277-332 (NGYFDKLPYELIQLILNHLTLPDLCRLAQTCKLLSQHCCDPLQYIHLNLQPYWAKL). 9 LRR repeats span residues 376–397 (ELVR…EVIS), 402–421 (NLQA…AFNH), 427–448 (SLKR…SILN), 452–474 (ELQH…ASMI), 480–501 (KLRT…AELA), 504–524 (CPLL…STGC), 532–558 (LPNL…ACNC), 559–583 (TRLQ…LLES), and 584–609 (CKDL…LNAS).

In terms of assembly, part of a SCF (SKP1-CUL1-F-box) protein ligase complex. Interacts with VCP. Interacts with PPTC7; this interaction promotes destruction of BNIP3 and NIX and mitophagy suppression. In terms of tissue distribution, expressed in heart, kidney, liver, lung, pancreas, and placenta, but not in skeletal muscle.

The protein resides in the cytoplasm. It localises to the nucleus. It is found in the mitochondrion outer membrane. Its function is as follows. Substrate-recognition component of the mitochondria-localized SCF-FBXL4 ubiquitin E3 ligase complex that plays a role in the restriction of mitophagy by controlling the degradation of BNIP3 and NIX mitophagy receptors. Rescues also mitochondrial injury through reverting hyperactivation of DRP1-mediated mitochondrial fission. This chain is F-box/LRR-repeat protein 4 (FBXL4), found in Homo sapiens (Human).